The primary structure comprises 172 residues: Biogenesis of lysosome-related organelles complex 1 subunit 6 (172 aa).

The segment covering 1–10 (MNVPVPPPPD) has biased composition (pro residues). Disordered stretches follow at residues 1-35 (MNVP…RSPD) and 136-172 (ALKL…AKRT). Residues 143–164 (RQKEELEREQQREREFEREKQL) show a composition bias toward basic and acidic residues.

It belongs to the BLOC1S6 family. As to quaternary structure, homodimer. Octamer composed of one copy each BLOC1S1, BLOC1S2, BLOC1S3, BLOC1S4, BLOC1S5, BLOC1S6, DTNBP1/BLOC1S7 and SNAPIN/BLOC1S8. The BLOC-1 complex associates with the AP-3 protein complex and membrane protein cargos. Interacts with BLOC1S4, BLOC1S5, DTNBP1/BLOC1S7, F-actin, SNAP25 isoform 1 and isoform 2, SNAP47 and STX12. Component of the biogenesis of lysosome-related organelles complex 1 (BLOC-1) composed of BLOC1S1, BLOC1S2, BLOC1S3, BLOC1S4, BLOC1S5, BLOC1S6, DTNBP1/BLOC1S7 and SNAPIN/BLOC1S8.

The protein localises to the cytoplasm. It localises to the membrane. Functionally, component of the BLOC-1 complex, a complex that is required for normal biogenesis of lysosome-related organelles (LRO), such as platelet dense granules and melanosomes. In concert with the AP-3 complex, the BLOC-1 complex is required to target membrane protein cargos into vesicles assembled at cell bodies for delivery into neurites and nerve terminals. The BLOC-1 complex, in association with SNARE proteins, is also proposed to be involved in neurite extension. May play a role in intracellular vesicle trafficking, particularly in the vesicle-docking and fusion process. This is Biogenesis of lysosome-related organelles complex 1 subunit 6 (Bloc1s6) from Rattus norvegicus (Rat).